The following is a 257-amino-acid chain: Hydroxyacylglutathione hydrolase (257 aa).

Zn(2+) is bound by residues histidine 56, histidine 58, aspartate 60, histidine 61, histidine 112, aspartate 131, and histidine 169.

It belongs to the metallo-beta-lactamase superfamily. Glyoxalase II family. In terms of assembly, monomer. The cofactor is Zn(2+).

The catalysed reaction is an S-(2-hydroxyacyl)glutathione + H2O = a 2-hydroxy carboxylate + glutathione + H(+). The protein operates within secondary metabolite metabolism; methylglyoxal degradation; (R)-lactate from methylglyoxal: step 2/2. Thiolesterase that catalyzes the hydrolysis of S-D-lactoyl-glutathione to form glutathione and D-lactic acid. This chain is Hydroxyacylglutathione hydrolase, found in Ectopseudomonas mendocina (strain ymp) (Pseudomonas mendocina).